Reading from the N-terminus, the 280-residue chain is UPF0758 protein Atu1607 (280 aa).

The segment at 1-22 is disordered; sequence MAKRPALPSADLSPTSGFEAGE. The MPN domain maps to 158 to 280; it reads VLGSWSSVID…HASFKGLRLI (123 aa). Positions 229, 231, and 242 each coordinate Zn(2+). The short motif at 229-242 is the JAMM motif element; it reads HNHPSGDPTPSRAD.

Belongs to the UPF0758 family.

The polypeptide is UPF0758 protein Atu1607 (Agrobacterium fabrum (strain C58 / ATCC 33970) (Agrobacterium tumefaciens (strain C58))).